A 303-amino-acid chain; its full sequence is Rhomboid-related protein 2 (303 aa).

Residues 20-39 (MKEELEEEEKMREDGGGKDR) are disordered. Basic and acidic residues predominate over residues 28–39 (EKMREDGGGKDR). 7 helical membrane-spanning segments follow: residues 72–92 (PVFI…YAVW), 128–148 (LVHA…VLGI), 159–179 (VGLV…IFDP), 183–203 (LVGA…NVLV), 212–232 (FGIF…GFAL), 245–265 (VSFA…YTVF), and 278–298 (FWIA…FNIF). Residue Ser-187 is the Nucleophile of the active site. The active site involves His-250.

It belongs to the peptidase S54 family. Proteolytic processing of the proenzyme produces a N-terminal fragment (NTF) and a C-terminal fragment (CTF). The processing is required for activation of the protease.

It localises to the cell membrane. The enzyme catalyses Cleaves type-1 transmembrane domains using a catalytic dyad composed of serine and histidine that are contributed by different transmembrane domains.. In terms of biological role, involved in regulated intramembrane proteolysis and the subsequent release of functional polypeptides from their membrane anchors. Known substrate: EFNB3. In Homo sapiens (Human), this protein is Rhomboid-related protein 2 (RHBDL2).